We begin with the raw amino-acid sequence, 255 residues long: Small ribosomal subunit protein uS2 (255 aa).

It belongs to the universal ribosomal protein uS2 family.

In Streptococcus pyogenes serotype M28 (strain MGAS6180), this protein is Small ribosomal subunit protein uS2.